Consider the following 141-residue polypeptide: Hemoglobin subunit alpha-A/Q/R/T (141 aa).

The region spanning 1 to 141 is the Globin domain; sequence VLSPADKTNV…VSTVLTSKYR (141 aa). Phosphoserine is present on Ser-3. The residue at position 7 (Lys-7) is an N6-succinyllysine. Thr-8 is subject to Phosphothreonine. N6-succinyllysine is present on Lys-11. N6-acetyllysine; alternate is present on Lys-16. Lys-16 carries the N6-succinyllysine; alternate modification. Tyr-24 is modified (phosphotyrosine). A Phosphoserine modification is found at Ser-35. The residue at position 40 (Lys-40) is an N6-succinyllysine. Residue Ser-49 is modified to Phosphoserine. His-58 lines the O2 pocket. A heme b-binding site is contributed by His-87. Ser-102 carries the post-translational modification Phosphoserine. The residue at position 108 (Thr-108) is a Phosphothreonine. Phosphoserine is present on residues Ser-124 and Ser-131. 2 positions are modified to phosphothreonine: Thr-134 and Thr-137. Ser-138 bears the Phosphoserine mark.

The protein belongs to the globin family. As to quaternary structure, heterotetramer of two alpha chains and two beta chains. Red blood cells.

Functionally, involved in oxygen transport from the lung to the various peripheral tissues. The protein is Hemoglobin subunit alpha-A/Q/R/T of Macaca fascicularis (Crab-eating macaque).